The following is a 209-amino-acid chain: Large ribosomal subunit protein uL3 (209 aa).

Q150 carries the N5-methylglutamine modification.

It belongs to the universal ribosomal protein uL3 family. As to quaternary structure, part of the 50S ribosomal subunit. Forms a cluster with proteins L14 and L19. Methylated by PrmB.

Its function is as follows. One of the primary rRNA binding proteins, it binds directly near the 3'-end of the 23S rRNA, where it nucleates assembly of the 50S subunit. The sequence is that of Large ribosomal subunit protein uL3 from Salmonella arizonae (strain ATCC BAA-731 / CDC346-86 / RSK2980).